The chain runs to 384 residues: Glucans biosynthesis protein C (384 aa).

The next 10 membrane-spanning stretches (helical) occupy residues 17-37 (AWLM…THSW), 54-74 (FIHA…SYML), 91-111 (VGIP…ILLQ), 140-160 (LWFL…FTWF), 173-193 (AISL…YAAI), 212-232 (FIVM…LAFI), 240-260 (FTTP…AYLL), 274-294 (TESV…FSLG), 311-331 (ASLF…AYIT), and 338-358 (LIGF…LYEI).

The protein belongs to the acyltransferase 3 family. OpgC subfamily.

It localises to the cell membrane. It functions in the pathway glycan metabolism; osmoregulated periplasmic glucan (OPG) biosynthesis. In terms of biological role, necessary for the succinyl substitution of periplasmic glucans. Could catalyze the transfer of succinyl residues from the cytoplasmic side of the membrane to the nascent glucan backbones on the periplasmic side of the membrane. The sequence is that of Glucans biosynthesis protein C from Salmonella gallinarum (strain 287/91 / NCTC 13346).